The following is a 415-amino-acid chain: MAQANLSEILFKPKFKHPETSTLVRHAHCNQAMNVHSALDGDTTSHWYRMINRLIWTWRGVDPLEIEEVLSRIACSKAEHSDNELLDTVVGYRNGNWIYEWAHQGMQWQQKAMEEADPMNAGQYWLNAANLYSIAGYPHLKGDELAEQVEVLSNRAYEEAAKHLPYTLKELSFDISDGGTLTGFLHMPTIGSAPFPTVLMCGGLDTLQSDYHRLFRDYLAPKGIAMLTIDLPSVGASSKWKLTQDTSFLHQQVLQALPNIPWIDHLRVSVFGFRFGANVAVRLGYLEPQRVRAVACLGPIVHHLLCNADSQRKLPDMYMDVMASRLGMADAADEILRAEMNRYSLKTQGLLGRRCQTPMLAGFWENDPFSPKEEAKLICSSSADGKLLPISSTPLYDNFHRALLQTSQWLEDKMR.

It belongs to the FrsA family.

The enzyme catalyses a carboxylic ester + H2O = an alcohol + a carboxylate + H(+). Catalyzes the hydrolysis of esters. The chain is Esterase FrsA from Yersinia enterocolitica serotype O:8 / biotype 1B (strain NCTC 13174 / 8081).